The chain runs to 234 residues: Glucosamine-6-phosphate deaminase (234 aa).

Residue Asp-62 is the Proton acceptor; for enolization step of the active site. Asn-128 serves as the catalytic For ring-opening step. His-130 (proton acceptor; for ring-opening step) is an active-site residue. Glu-135 (for ring-opening step) is an active-site residue.

This sequence belongs to the glucosamine/galactosamine-6-phosphate isomerase family. NagB subfamily.

It catalyses the reaction alpha-D-glucosamine 6-phosphate + H2O = beta-D-fructose 6-phosphate + NH4(+). It functions in the pathway amino-sugar metabolism; N-acetylneuraminate degradation; D-fructose 6-phosphate from N-acetylneuraminate: step 5/5. Catalyzes the reversible isomerization-deamination of glucosamine 6-phosphate (GlcN6P) to form fructose 6-phosphate (Fru6P) and ammonium ion. In Streptococcus equi subsp. equi (strain 4047), this protein is Glucosamine-6-phosphate deaminase.